A 509-amino-acid chain; its full sequence is Protein OS-9 homolog (509 aa).

The N-terminal stretch at 1 to 23 (MRRQSRIVASLLVLACASSGAFA) is a signal peptide. The span at 64-74 (SPDLNDISEQT) shows a compositional bias: polar residues. Residues 64–91 (SPDLNDISEQTPLKDESEESIRDGSSGE) are disordered. The span at 75-91 (PLKDESEESIRDGSSGE) shows a compositional bias: basic and acidic residues. A glycan (N-linked (GlcNAc...) asparagine) is linked at N120. Residues 151–291 (GKCLYYISGW…LIYTPRLCND (141 aa)) form the MRH domain. Cysteines 153 and 166 form a disulfide. Residues W160, W161, Q173, D246, R252, E273, and Y279 each coordinate a mannooligosaccharide derivative. Intrachain disulfides connect C245–C277 and C260–C289. Residues 433–509 (GVVDTDEDEE…GSEEIFKDEL (77 aa)) form a disordered region. The span at 436 to 451 (DTDEDEEDGYENEEGE) shows a compositional bias: acidic residues. The segment covering 452–461 (TDKREQRENT) has biased composition (basic and acidic residues). Over residues 489-502 (RSEDGEDPDVDGSE) the composition is skewed to acidic residues. The Prevents secretion from ER signature appears at 506–509 (KDEL).

Belongs to the OS-9 family. Interacts with missfolded ER lumenal proteins.

The protein localises to the endoplasmic reticulum membrane. Lectin involved in the quality control of the secretory pathway. As a member of the endoplasmic reticulum-associated degradation lumenal (ERAD-L) surveillance system, targets misfolded endoplasmic reticulum lumenal glycoproteins for degradation. The chain is Protein OS-9 homolog (yos9) from Emericella nidulans (strain FGSC A4 / ATCC 38163 / CBS 112.46 / NRRL 194 / M139) (Aspergillus nidulans).